Here is a 334-residue protein sequence, read N- to C-terminus: Mevalonate kinase (334 aa).

ATP is bound at residue 110–120; that stretch reads PVGAGLGSSAA. Catalysis depends on D161, which acts as the Proton acceptor.

The protein belongs to the GHMP kinase family. Mevalonate kinase subfamily. Homodimer. The cofactor is Mg(2+).

It localises to the cytoplasm. It carries out the reaction (R)-mevalonate + ATP = (R)-5-phosphomevalonate + ADP + H(+). It participates in isoprenoid biosynthesis; isopentenyl diphosphate biosynthesis via mevalonate pathway; isopentenyl diphosphate from (R)-mevalonate: step 1/3. Catalyzes the phosphorylation of (R)-mevalonate (MVA) to (R)-mevalonate 5-phosphate (MVAP). Functions in the mevalonate (MVA) pathway leading to isopentenyl diphosphate (IPP), a key precursor for the biosynthesis of isoprenoid compounds such as archaeal membrane lipids. This chain is Mevalonate kinase, found in Thermococcus gammatolerans (strain DSM 15229 / JCM 11827 / EJ3).